A 225-amino-acid polypeptide reads, in one-letter code: NAD(P)H-quinone oxidoreductase subunit K, chloroplastic (225 aa).

[4Fe-4S] cluster contacts are provided by C43, C44, C108, and C139.

Belongs to the complex I 20 kDa subunit family. As to quaternary structure, NDH is composed of at least 16 different subunits, 5 of which are encoded in the nucleus. The cofactor is [4Fe-4S] cluster.

The protein resides in the plastid. Its subcellular location is the chloroplast thylakoid membrane. It carries out the reaction a plastoquinone + NADH + (n+1) H(+)(in) = a plastoquinol + NAD(+) + n H(+)(out). The catalysed reaction is a plastoquinone + NADPH + (n+1) H(+)(in) = a plastoquinol + NADP(+) + n H(+)(out). Its function is as follows. NDH shuttles electrons from NAD(P)H:plastoquinone, via FMN and iron-sulfur (Fe-S) centers, to quinones in the photosynthetic chain and possibly in a chloroplast respiratory chain. The immediate electron acceptor for the enzyme in this species is believed to be plastoquinone. Couples the redox reaction to proton translocation, and thus conserves the redox energy in a proton gradient. This is NAD(P)H-quinone oxidoreductase subunit K, chloroplastic from Lactuca sativa (Garden lettuce).